The following is a 64-amino-acid chain: Disintegrin schistatin (64 aa).

A Disintegrin domain is found at 1–64 (NSVHPCCDPV…PDCPRNRYNV (64 aa)). 4 disulfides stabilise this stretch: cysteine 6–cysteine 29, cysteine 20–cysteine 26, cysteine 25–cysteine 50, and cysteine 38–cysteine 57. Positions 42 to 44 (RGD) match the Cell attachment site motif.

The protein belongs to the disintegrin family. Dimeric disintegrin subfamily. In terms of assembly, homodimer; disulfide-linked. As to expression, expressed by the venom gland.

Its subcellular location is the secreted. In terms of biological role, may bind to both alpha-IIb/beta-3 (ITGA2B/ITGB3) and alpha-V/beta-3 (ITGAV/ITGB3) integrins, and may inhibit platelet aggregation. The protein is Disintegrin schistatin of Echis carinatus (Saw-scaled viper).